A 1486-amino-acid polypeptide reads, in one-letter code: Chromosome partition protein MukB (1486 aa).

Residue glycine 34–serine 41 coordinates ATP. Coiled-coil stretches lie at residues leucine 326–glutamine 418, leucine 444–glutamine 480, and arginine 509–valine 603. The flexible hinge stretch occupies residues proline 666–arginine 783. Coiled-coil stretches lie at residues glutamate 835–glutamate 923, glutamate 977–alanine 1115, and valine 1209–serine 1266.

This sequence belongs to the SMC family. MukB subfamily. Homodimerization via its hinge domain. Binds to DNA via its C-terminal region. Interacts, and probably forms a ternary complex, with MukE and MukF via its C-terminal region. The complex formation is stimulated by calcium or magnesium. Interacts with tubulin-related protein FtsZ.

Its subcellular location is the cytoplasm. It is found in the nucleoid. Functionally, plays a central role in chromosome condensation, segregation and cell cycle progression. Functions as a homodimer, which is essential for chromosome partition. Involved in negative DNA supercoiling in vivo, and by this means organize and compact chromosomes. May achieve or facilitate chromosome segregation by condensation DNA from both sides of a centrally located replisome during cell division. The polypeptide is Chromosome partition protein MukB (Shigella boydii serotype 4 (strain Sb227)).